Consider the following 223-residue polypeptide: MKLSLNETRVIGVLIEKEVTTPDQYPMSLNALTNACNQKTNREPVLNLSETEVQESLDALAKQGLVVESRVGNRIPKYKHRFCNSEFGELQFTKQELAIVCTLFLRGAQTPGELRTRTNRLCTFADVQETEKVLQGLIDHSRGSYVVKLEREPGKRESRYAHLFSGDAATTVAQIPATTNTSTPAQSNSPQNNAELLERVEMLELTVEELQNQINKLVEQLGG.

The protein belongs to the UPF0502 family.

This Saccharophagus degradans (strain 2-40 / ATCC 43961 / DSM 17024) protein is UPF0502 protein Sde_2426.